Here is an 89-residue protein sequence, read N- to C-terminus: Small ribosomal subunit protein bS20 (89 aa).

Residues 1–12 (MANHKSAIKRHR) are compositionally biased toward basic residues. A disordered region spans residues 1–26 (MANHKSAIKRHRQSVERAGRNRAART).

This sequence belongs to the bacterial ribosomal protein bS20 family.

Functionally, binds directly to 16S ribosomal RNA. This chain is Small ribosomal subunit protein bS20, found in Desulfovibrio desulfuricans (strain ATCC 27774 / DSM 6949 / MB).